The sequence spans 305 residues: UDP-N-acetylenolpyruvoylglucosamine reductase 2 (305 aa).

One can recognise an FAD-binding PCMH-type domain in the interval 33-197 (VGGKADVFVA…LEARFELEEG (165 aa)). R176 is a catalytic residue. S226 functions as the Proton donor in the catalytic mechanism. The active site involves E296.

It belongs to the MurB family. FAD is required as a cofactor.

Its subcellular location is the cytoplasm. The enzyme catalyses UDP-N-acetyl-alpha-D-muramate + NADP(+) = UDP-N-acetyl-3-O-(1-carboxyvinyl)-alpha-D-glucosamine + NADPH + H(+). The protein operates within cell wall biogenesis; peptidoglycan biosynthesis. In terms of biological role, cell wall formation. The polypeptide is UDP-N-acetylenolpyruvoylglucosamine reductase 2 (murB2) (Bacillus anthracis).